We begin with the raw amino-acid sequence, 399 residues long: Acetate kinase (399 aa).

Asn7 is a Mg(2+) binding site. Residue Lys14 participates in ATP binding. A substrate-binding site is contributed by Arg91. The Proton donor/acceptor role is filled by Asp148. ATP-binding positions include 208 to 212 (HIGNG), 283 to 285 (DMR), and 331 to 335 (GVGEN). Glu385 lines the Mg(2+) pocket.

The protein belongs to the acetokinase family. Homodimer. The cofactor is Mg(2+). Requires Mn(2+) as cofactor.

Its subcellular location is the cytoplasm. The catalysed reaction is acetate + ATP = acetyl phosphate + ADP. Its pathway is metabolic intermediate biosynthesis; acetyl-CoA biosynthesis; acetyl-CoA from acetate: step 1/2. In terms of biological role, catalyzes the formation of acetyl phosphate from acetate and ATP. Can also catalyze the reverse reaction. This chain is Acetate kinase, found in Bacteroides thetaiotaomicron (strain ATCC 29148 / DSM 2079 / JCM 5827 / CCUG 10774 / NCTC 10582 / VPI-5482 / E50).